We begin with the raw amino-acid sequence, 418 residues long: Putative competence-damage inducible protein (418 aa).

This sequence belongs to the CinA family.

This chain is Putative competence-damage inducible protein, found in Streptococcus pneumoniae (strain 70585).